The primary structure comprises 131 residues: Large ribosomal subunit protein bL19 (131 aa).

Positions 107-131 (GKSARIAERAERGSDKGKAAPAAAE) are disordered. The segment covering 111–124 (RIAERAERGSDKGK) has biased composition (basic and acidic residues).

Belongs to the bacterial ribosomal protein bL19 family.

This protein is located at the 30S-50S ribosomal subunit interface and may play a role in the structure and function of the aminoacyl-tRNA binding site. The sequence is that of Large ribosomal subunit protein bL19 from Methylobacterium sp. (strain 4-46).